The sequence spans 353 residues: UPF0283 membrane protein YcjF (353 aa).

Helical transmembrane passes span 70–90 (MVMG…VQWT), 100–120 (VALG…GSVV), and 213–233 (ESTL…FIAW).

It belongs to the UPF0283 family.

It is found in the cell inner membrane. This Escherichia coli O7:K1 (strain IAI39 / ExPEC) protein is UPF0283 membrane protein YcjF.